The chain runs to 172 residues: Galectin-related protein (172 aa).

At Ala2 the chain carries N-acetylalanine. Ser22 and Ser25 each carry phosphoserine. Residues 39–168 (PFCGHIKGGM…TIKINGDLQI (130 aa)) form the Galectin domain.

Monomer.

Functionally, does not bind lactose, and may not bind carbohydrates. This Mus musculus (Mouse) protein is Galectin-related protein (Lgalsl).